A 433-amino-acid chain; its full sequence is UDP-N-acetylglucosamine 1-carboxyvinyltransferase 1 (433 aa).

K22–N23 lines the phosphoenolpyruvate pocket. R95 contributes to the UDP-N-acetyl-alpha-D-glucosamine binding site. Catalysis depends on C119, which acts as the Proton donor. C119 carries the post-translational modification 2-(S-cysteinyl)pyruvic acid O-phosphothioketal. UDP-N-acetyl-alpha-D-glucosamine-binding positions include R124 to L128, D307, and V329.

It belongs to the EPSP synthase family. MurA subfamily.

The protein localises to the cytoplasm. It catalyses the reaction phosphoenolpyruvate + UDP-N-acetyl-alpha-D-glucosamine = UDP-N-acetyl-3-O-(1-carboxyvinyl)-alpha-D-glucosamine + phosphate. Its pathway is cell wall biogenesis; peptidoglycan biosynthesis. Functionally, cell wall formation. Adds enolpyruvyl to UDP-N-acetylglucosamine. In Latilactobacillus sakei subsp. sakei (strain 23K) (Lactobacillus sakei subsp. sakei), this protein is UDP-N-acetylglucosamine 1-carboxyvinyltransferase 1.